A 95-amino-acid chain; its full sequence is Small ribosomal subunit protein bS18 (95 aa).

This sequence belongs to the bacterial ribosomal protein bS18 family. As to quaternary structure, part of the 30S ribosomal subunit. Forms a tight heterodimer with protein bS6.

In terms of biological role, binds as a heterodimer with protein bS6 to the central domain of the 16S rRNA, where it helps stabilize the platform of the 30S subunit. The polypeptide is Small ribosomal subunit protein bS18 (Rickettsia prowazekii (strain Madrid E)).